The primary structure comprises 71 residues: Small ribosomal subunit protein bS21 (71 aa).

The tract at residues 43 to 71 (TERKRAKASAVKRHAKKLARENARRTRLY) is disordered. Basic residues predominate over residues 46-59 (KRAKASAVKRHAKK). The segment covering 60–71 (LARENARRTRLY) has biased composition (basic and acidic residues).

The protein belongs to the bacterial ribosomal protein bS21 family.

The protein is Small ribosomal subunit protein bS21 of Edwardsiella ictaluri (strain 93-146).